Consider the following 131-residue polypeptide: Small ribosomal subunit protein eS24 (131 aa).

Residues 93–131 (RHGLYEKKKTSRKQRKERKNRMKKVRGTKKASVGAAGKK) form a disordered region. Basic residues predominate over residues 101-121 (KTSRKQRKERKNRMKKVRGTK).

Belongs to the eukaryotic ribosomal protein eS24 family. Component of the small ribosomal subunit. Part of the small subunit (SSU) processome, composed of more than 70 proteins and the RNA chaperone small nucleolar RNA (snoRNA) U3.

The protein localises to the cytoplasm. It is found in the nucleus. Its subcellular location is the nucleolus. Its function is as follows. Component of the small ribosomal subunit. The ribosome is a large ribonucleoprotein complex responsible for the synthesis of proteins in the cell. Required for processing of pre-rRNA and maturation of 40S ribosomal subunits. Part of the small subunit (SSU) processome, first precursor of the small eukaryotic ribosomal subunit. During the assembly of the SSU processome in the nucleolus, many ribosome biogenesis factors, an RNA chaperone and ribosomal proteins associate with the nascent pre-rRNA and work in concert to generate RNA folding, modifications, rearrangements and cleavage as well as targeted degradation of pre-ribosomal RNA by the RNA exosome. The chain is Small ribosomal subunit protein eS24 (rps24) from Ictalurus punctatus (Channel catfish).